The primary structure comprises 313 residues: uncharacterized protein (313 aa).

9 helical membrane-spanning segments follow: residues 31–53 (AWGIGVIFPLYSLHALVLGGWLF), 62–84 (LFLFGCVFGMYEAYITKVLWNPY), 104–126 (VFFWHPIFAFILPLLIAEYIYTS), 147–161 (FALLLAALAGLNQSV), 166–185 (SMFWVALLSFFTILTPSFLL), 198–220 (RVLKLLTFALIILYLFWTFALRF), 225–244 (SFSGQLVVWLFYLLLFYLII), 264–282 (FFAACFLVYLTAFLITSSF), and 286–308 (PAAMLFLLAGTAYGTIVFASILI).

The protein localises to the cell membrane. This is an uncharacterized protein from Archaeoglobus fulgidus (strain ATCC 49558 / DSM 4304 / JCM 9628 / NBRC 100126 / VC-16).